Reading from the N-terminus, the 146-residue chain is 3-dehydroquinate dehydratase (146 aa).

Tyr22 acts as the Proton acceptor in catalysis. Positions 74, 80, and 87 each coordinate substrate. His100 functions as the Proton donor in the catalytic mechanism. Residues Leu101 to Ser102 and Arg111 each bind substrate.

Belongs to the type-II 3-dehydroquinase family. As to quaternary structure, homododecamer.

The enzyme catalyses 3-dehydroquinate = 3-dehydroshikimate + H2O. It participates in metabolic intermediate biosynthesis; chorismate biosynthesis; chorismate from D-erythrose 4-phosphate and phosphoenolpyruvate: step 3/7. Functionally, catalyzes a trans-dehydration via an enolate intermediate. This chain is 3-dehydroquinate dehydratase, found in Clostridium beijerinckii (strain ATCC 51743 / NCIMB 8052) (Clostridium acetobutylicum).